The following is an 89-amino-acid chain: Small ribosomal subunit protein uS17 (89 aa).

It belongs to the universal ribosomal protein uS17 family. As to quaternary structure, part of the 30S ribosomal subunit.

Functionally, one of the primary rRNA binding proteins, it binds specifically to the 5'-end of 16S ribosomal RNA. The protein is Small ribosomal subunit protein uS17 of Nocardia farcinica (strain IFM 10152).